The primary structure comprises 504 residues: Pre-mRNA-processing factor 19 (504 aa).

Position 2 is an N-acetylserine (serine 2). In terms of domain architecture, U-box spans 2–73; that stretch reads SLICSISNEV…KPPSATSIPA (72 aa). Positions 68-223 are may mediate interaction with PSMC5; the sequence is ATSIPAILKA…VGLHSASIPG (156 aa). An N6-acetyllysine mark is found at lysine 122, lysine 179, lysine 244, and lysine 261. The stretch at 219–259 is one WD 1 repeat; the sequence is ASIPGILALDLCPSDTNKILTGGADKNVVVFDKSTEQILAT. WD repeat units follow at residues 262-301, 304-345, 348-387, 390-429, 433-472, and 473-503; these read GHTKKVTSVVFHPSQELVFSASPDATIRIWSVPNTSCVQV, AHES…TKVT, TSGCSLTCAQFHPDGLIFGTGTMDSQIKIWDLKERTNVAN, GHSGPITSIAFSENGYYLATAADDSSVKLWDLRKLKNFKT, DNNFEVKSLIFDQSGTYLALGGTDVQIYICKQWTEILHFT, and EHSGLTTGVAFGHHAKFIASTGMDRSLKFYS.

It belongs to the WD repeat PRP19 family. As to quaternary structure, homotetramer. Component of activated, catalytic and post-catalytic spliceosomes. Component of the Prp19 complex/PRP19C/Nineteen complex/NTC and related complexes described as PRP19-CDC5L splicing complex and PSO4 complex. A homotetramer of PRPF19, CDC5L, PLRG1 and BCAS2 constitute the core of those complexes. The interaction with CDC5L, PLRG1 and BCAS2 is direct within this core complex. At least three less stably associated proteins CTNNBL1, CWC15 and HSPA8 are found in the Prp19 complex. The Prp19 complex associates with the spliceosome during its assembly and remodeling recruiting additional proteins. Component of the XAB2 complex, a multimeric protein complex composed of XAB2, PRPF19, AQR, ZNF830, ISY1, and PPIE. Interacts with CWC22 and EIF4A3 in an RNA-independent manner. Interacts with RPA1 and RPA2; the PRP19-CDC5L complex is recruited to the sites of DNA repair where it interacts with the replication protein A complex (RPA). Interacts with SETMAR; required for SETMAR recruitment to site of DNA damage. Interacts with U2AF2; the interaction is direct and recruits the Prp19 complex to RNA polymerase II C-terminal domain (CTD) and the pre-mRNA. Interacts with PRPF3. Interacts with APEX1, DNTT and PSMB4. Interacts with KNSTRN. Interacts with PSMC5. Isoform 2 (via N-terminus) interacts with PPIA. Isoform 2 does not interact with CDC5L. Interacts with KHDC4. Interacts with USB1. Interacts with DDX41. Expressed in white and brown adipose tissues, brain and to a lower extent in liver, kidney, muscle, lung and spleen (at protein level).

The protein resides in the nucleus. It localises to the nucleoplasm. Its subcellular location is the cytoplasm. The protein localises to the cytoskeleton. It is found in the spindle. The protein resides in the lipid droplet. The catalysed reaction is S-ubiquitinyl-[E2 ubiquitin-conjugating enzyme]-L-cysteine + [acceptor protein]-L-lysine = [E2 ubiquitin-conjugating enzyme]-L-cysteine + N(6)-ubiquitinyl-[acceptor protein]-L-lysine.. The protein operates within protein modification; protein ubiquitination. Functionally, ubiquitin-protein ligase which is a core component of several complexes mainly involved in pre-mRNA splicing and DNA repair. Required for pre-mRNA splicing as component of the spliceosome. Core component of the PRP19C/Prp19 complex/NTC/Nineteen complex which is part of the spliceosome and participates in its assembly, its remodeling and is required for its activity. During assembly of the spliceosome, mediates 'Lys-63'-linked polyubiquitination of the U4 spliceosomal protein PRPF3. Ubiquitination of PRPF3 allows its recognition by the U5 component PRPF8 and stabilizes the U4/U5/U6 tri-snRNP spliceosomal complex. Recruited to RNA polymerase II C-terminal domain (CTD) and the pre-mRNA, it may also couple the transcriptional and spliceosomal machineries. The XAB2 complex, which contains PRPF19, is also involved in pre-mRNA splicing, transcription and transcription-coupled repair. Beside its role in pre-mRNA splicing PRPF19, as part of the PRP19-CDC5L complex, plays a role in the DNA damage response/DDR. It is recruited to the sites of DNA damage by the RPA complex where PRPF19 directly ubiquitinates RPA1 and RPA2. 'Lys-63'-linked polyubiquitination of the RPA complex allows the recruitment of the ATR-ATRIP complex and the activation of ATR, a master regulator of the DNA damage response. May also play a role in DNA double-strand break (DSB) repair by recruiting the repair factor SETMAR to altered DNA. As part of the PSO4 complex may also be involved in the DNA interstrand cross-links/ICLs repair process. In addition, may also mediate 'Lys-48'-linked polyubiquitination of substrates and play a role in proteasomal degradation. May play a role in the biogenesis of lipid droplets. May play a role in neural differentiation possibly through its function as part of the spliceosome. In terms of biological role, forced expression leads to suppression of neuronal differentiation, and on the contrary to stimulation of astroglial cell differentiation in retinoic acid-primed P19 cells. The sequence is that of Pre-mRNA-processing factor 19 from Mus musculus (Mouse).